A 940-amino-acid chain; its full sequence is Isoleucine--tRNA ligase (940 aa).

Positions 58–68 match the 'HIGH' region motif; it reads PYANGSIHIGH. Glu-564 serves as a coordination point for L-isoleucyl-5'-AMP. Residues 605–609 carry the 'KMSKS' region motif; that stretch reads KMSKS. Lys-608 serves as a coordination point for ATP. Residues Cys-903, Cys-906, Cys-923, and Cys-926 each contribute to the Zn(2+) site.

It belongs to the class-I aminoacyl-tRNA synthetase family. IleS type 1 subfamily. Monomer. The cofactor is Zn(2+).

It localises to the cytoplasm. The catalysed reaction is tRNA(Ile) + L-isoleucine + ATP = L-isoleucyl-tRNA(Ile) + AMP + diphosphate. Catalyzes the attachment of isoleucine to tRNA(Ile). As IleRS can inadvertently accommodate and process structurally similar amino acids such as valine, to avoid such errors it has two additional distinct tRNA(Ile)-dependent editing activities. One activity is designated as 'pretransfer' editing and involves the hydrolysis of activated Val-AMP. The other activity is designated 'posttransfer' editing and involves deacylation of mischarged Val-tRNA(Ile). The polypeptide is Isoleucine--tRNA ligase (Shewanella putrefaciens (strain CN-32 / ATCC BAA-453)).